The chain runs to 146 residues: MKIYVDADACPVKDVIIFEATKAEIPVTLVTSFSHYSNAEQPIGVETIYVDSGADAADYRIMQLAQKEDLIITQDYGLASLALAKGCIVLHHKGYKYTNDNIEQLLQTRYLSAMVRKSGKRTKGPKPFTAEDKEKFRALFKSFIVR.

This sequence belongs to the UPF0178 family.

The sequence is that of UPF0178 protein BCQ_2874 from Bacillus cereus (strain Q1).